The following is a 216-amino-acid chain: Ras-related protein Rab-2B (216 aa).

GTP-binding residues include Gly16, Val17, Gly18, Lys19, Ser20, Cys21, and Thr38. Residue Ser20 participates in Mg(2+) binding. The short motif at 37–42 is the Switch 1 element; it reads LTIGVE. 2 residues coordinate Mg(2+): Thr38 and Asp61. Positions 63-72 match the Switch 2 motif; that stretch reads AGQESFRSIT. Gly64, Asn119, Lys120, Asp122, Ala150, and Lys151 together coordinate GTP. The segment covering 189-207 has biased composition (polar residues); the sequence is PQQSITSSVGPCSPQQNVS. Positions 189 to 216 are disordered; that stretch reads PQQSITSSVGPCSPQQNVSDIGPDSGCC. 2 S-geranylgeranyl cysteine lipidation sites follow: Cys215 and Cys216.

It belongs to the small GTPase superfamily. Rab family. In terms of assembly, interacts (in GTP-bound form) with GARIN4 (via N-terminus). Interacts (in GTP-bound form) with GARIN5A. Interacts (in GTP-bound form) with GARIN1B. Interacts with VPS39 and VPS41. Mg(2+) serves as cofactor.

It localises to the cell membrane. The protein localises to the endoplasmic reticulum membrane. The protein resides in the golgi apparatus membrane. Its subcellular location is the cytoplasmic vesicle. It is found in the secretory vesicle. It localises to the acrosome. The protein localises to the autophagosome membrane. The catalysed reaction is GTP + H2O = GDP + phosphate + H(+). With respect to regulation, regulated by guanine nucleotide exchange factors (GEFs) which promote the exchange of bound GDP for free GTP, GTPase activating proteins (GAPs) which increase the GTP hydrolysis activity, and GDP dissociation inhibitors (GDIs) which inhibit the dissociation of the nucleotide from the GTPase. In terms of biological role, the small GTPases Rab are key regulators of intracellular membrane trafficking, from the formation of transport vesicles to their fusion with membranes. Rabs cycle between active GTP-bound and inactive GDP-bound states. In their active state, drive transport of vesicular carriers from donor organelles to acceptor organelles to regulate the membrane traffic that maintains organelle identity and morphology. Regulates the compacted morphology of the Golgi. Promotes cytosolic DNA-induced innate immune responses. Regulates IFN responses against DNA viruses by regulating the CGAS-STING signaling axis. Together with RAB2A redundantly required for efficient autophagic flux. The sequence is that of Ras-related protein Rab-2B (Rab2b) from Mus musculus (Mouse).